We begin with the raw amino-acid sequence, 208 residues long: MIDNTKIRSLLEKGLAEFKLDSIGDLLLDFLLLLNKWNKTYNLTAIRDIETMVSKHLFDSLAILPWIKGNHIIDVGTGPGLPGIPLAIAKPDLQFVLLDSNGKKIRFLNEVKRQLNIKNIEPIQIRVENYHPNQGFDTVISRAFSSLEQMIKWTQHLVAQDGLWLAMKGRFPDTELVPIHQTYRVERYAVPGIEGERCCVLINNTNKE.

S-adenosyl-L-methionine is bound by residues glycine 76, leucine 81, 127–128 (VE), and arginine 142.

The protein belongs to the methyltransferase superfamily. RNA methyltransferase RsmG family.

Its subcellular location is the cytoplasm. It catalyses the reaction guanosine(527) in 16S rRNA + S-adenosyl-L-methionine = N(7)-methylguanosine(527) in 16S rRNA + S-adenosyl-L-homocysteine. Specifically methylates the N7 position of guanine in position 527 of 16S rRNA. In Legionella pneumophila subsp. pneumophila (strain Philadelphia 1 / ATCC 33152 / DSM 7513), this protein is Ribosomal RNA small subunit methyltransferase G.